A 117-amino-acid polypeptide reads, in one-letter code: Ribonuclease P protein component (117 aa).

It belongs to the RnpA family. In terms of assembly, consists of a catalytic RNA component (M1 or rnpB) and a protein subunit.

The catalysed reaction is Endonucleolytic cleavage of RNA, removing 5'-extranucleotides from tRNA precursor.. Its function is as follows. RNaseP catalyzes the removal of the 5'-leader sequence from pre-tRNA to produce the mature 5'-terminus. It can also cleave other RNA substrates such as 4.5S RNA. The protein component plays an auxiliary but essential role in vivo by binding to the 5'-leader sequence and broadening the substrate specificity of the ribozyme. The protein is Ribonuclease P protein component of Lactococcus lactis subsp. cremoris (strain MG1363).